Consider the following 370-residue polypeptide: Aminomethyltransferase (370 aa).

It belongs to the GcvT family. As to quaternary structure, the glycine cleavage system is composed of four proteins: P, T, L and H.

It catalyses the reaction N(6)-[(R)-S(8)-aminomethyldihydrolipoyl]-L-lysyl-[protein] + (6S)-5,6,7,8-tetrahydrofolate = N(6)-[(R)-dihydrolipoyl]-L-lysyl-[protein] + (6R)-5,10-methylene-5,6,7,8-tetrahydrofolate + NH4(+). The glycine cleavage system catalyzes the degradation of glycine. This chain is Aminomethyltransferase, found in Clostridium botulinum (strain ATCC 19397 / Type A).